Reading from the N-terminus, the 861-residue chain is E3 ubiquitin-protein ligase HECTD3 (861 aa).

Position 2 is an N-acetylalanine (alanine 2). Residue serine 12 is modified to Phosphoserine. The region spanning 219–397 (DEDLIHFLYD…ASLVRYPRLE (179 aa)) is the DOC domain. An HECT domain is found at 512–857 (YEKPLDYRWP…NCVAIDTDMS (346 aa)). Cysteine 823 serves as the catalytic Glycyl thioester intermediate.

As to quaternary structure, interacts with TRIOBP. Interacts with STX8.

Its subcellular location is the cytoplasm. The protein resides in the perinuclear region. It carries out the reaction S-ubiquitinyl-[E2 ubiquitin-conjugating enzyme]-L-cysteine + [acceptor protein]-L-lysine = [E2 ubiquitin-conjugating enzyme]-L-cysteine + N(6)-ubiquitinyl-[acceptor protein]-L-lysine.. The protein operates within protein modification; protein ubiquitination. In terms of biological role, E3 ubiquitin ligases accepts ubiquitin from an E2 ubiquitin-conjugating enzyme in the form of a thioester and then directly transfers the ubiquitin to targeted substrates. Mediates ubiquitination of TRIOBP and its subsequent proteasomal degradation, thus facilitating cell cycle progression by regulating the turn-over of TRIOBP. Also mediates ubiquitination of STX8. The protein is E3 ubiquitin-protein ligase HECTD3 (Hectd3) of Mus musculus (Mouse).